The sequence spans 529 residues: MQQRRSVRRALLSVSDKAGIVEFAQALSARGVELLSTGGTARLLAEKGLPVTEVSDYTGFPEMMDGRVKTLHPKVHGGILGRRGQDDGIMEQHGIAPIDMVVVNLYPFAETVAHVGCSLEDAVENIDIGGPTMVRSAAKNHKDVAIVVKSSDYDAIINEMDANEGSLLLETRFDLAIKAFEHTAAYDSMIANYFGSMVPAYHGESKEAAGRFPRTLNLNFIKKQDMRYGENSHQQAAFYIEENVKEASVATAQQVQGKALSYNNIADTDAALECVKAFSEPACVIVKHANPCGVAVSASILDAYDRAYKTDPTSAFGGIIAFNRELDAETAQAIISRQFVEVIIAPSATEEALKITAAKQNVRVLTCGQWAQRVPGLDFKRVNGGLLVQDRDLGMVSERELRVVSKRQPTEQELRDALFCWKVAKFVKSNAIVYAKENMTIGIGAGQMSRVYSAKIAGIKAADEGLEVQGSAMASDAFFPFRDGIDAAAAVGVSCVIQPGGSIRDDEVIAAADEHGIAMIFTDMRHFRH.

The 148-residue stretch at Met-1 to Val-148 folds into the MGS-like domain.

This sequence belongs to the PurH family.

It catalyses the reaction (6R)-10-formyltetrahydrofolate + 5-amino-1-(5-phospho-beta-D-ribosyl)imidazole-4-carboxamide = 5-formamido-1-(5-phospho-D-ribosyl)imidazole-4-carboxamide + (6S)-5,6,7,8-tetrahydrofolate. It carries out the reaction IMP + H2O = 5-formamido-1-(5-phospho-D-ribosyl)imidazole-4-carboxamide. It functions in the pathway purine metabolism; IMP biosynthesis via de novo pathway; 5-formamido-1-(5-phospho-D-ribosyl)imidazole-4-carboxamide from 5-amino-1-(5-phospho-D-ribosyl)imidazole-4-carboxamide (10-formyl THF route): step 1/1. It participates in purine metabolism; IMP biosynthesis via de novo pathway; IMP from 5-formamido-1-(5-phospho-D-ribosyl)imidazole-4-carboxamide: step 1/1. The protein is Bifunctional purine biosynthesis protein PurH of Salmonella arizonae (strain ATCC BAA-731 / CDC346-86 / RSK2980).